The sequence spans 223 residues: MVMAEGTAVLRRNRPGTKAQDFYNWPDESFEEMDSTLAVQQYIQQNIRADCSNIDKILEPPEGQDEGVWKYEHLRQFCLELNGLAVKLQSECHPDTCTQMTATEQWIFLCAAHKTPKECPAIDYTRHTLDGAACLLNSNKYFPSRVSIKESSVAKLGSVCRRIYRIFSHAYFHHRQIFDEYENETFLCHRFTKFVMKYNLMSKDNLIVPILEEEVQNSVSGGE.

Positions 92, 97, 110, 113, 119, 127, 169, and 174 each coordinate Zn(2+).

It belongs to the MOB1/phocein family. Part of the core of STRIPAK complexes composed of PP2A catalytic and scaffolding subunits, the striatins (PP2A regulatory subunits), the striatin-associated proteins MOB4, STRIP1 and STRIP2, PDCD10 and members of the STE20 kinases, such as STK24 and STK26.

The protein localises to the cytoplasm. The protein resides in the membrane. Its subcellular location is the golgi apparatus. It is found in the golgi stack membrane. Functionally, part of the striatin-interacting phosphatase and kinase (STRIPAK) complexes. STRIPAK complexes have critical roles in protein (de)phosphorylation and are regulators of multiple signaling pathways including Hippo, MAPK, nuclear receptor and cytoskeleton remodeling. Different types of STRIPAK complexes are involved in a variety of biological processes such as cell growth, differentiation, apoptosis, metabolism and immune regulation. This chain is MOB-like protein phocein (MOB4), found in Gallus gallus (Chicken).